Consider the following 937-residue polypeptide: Translation initiation factor IF-2 (937 aa).

A disordered region spans residues 47 to 352 (RAAFQTKATP…EMPQRKERPL (306 aa)). Low complexity predominate over residues 52–68 (TKATPAASKPATPAAPK). Over residues 97 to 116 (QHSNNRPQANANRNGQASNG) the composition is skewed to polar residues. The span at 117–153 (QNRTNNARPNNNSARPNNSRPNTNSRPNNNSQNRSTS) shows a compositional bias: low complexity. Residues 154–169 (ANHPMSLQEQISQANA) are compositionally biased toward polar residues. Positions 173–197 (RTQERIQQQREQREADEKKRREQAN) are enriched in basic and acidic residues. Residues 202 to 229 (TRNNASNNRPSNGKPTNGARPTTNSPRP) are compositionally biased toward polar residues. Positions 240 to 269 (SSRPNNNNSARPNTTNNRPTNSRPATTPSR) are enriched in low complexity. The segment covering 274–298 (QEMQQKMQANTVSASKPASNNTASK) has biased composition (polar residues). Residues 322 to 331 (FNKKRKKTRK) are compositionally biased toward basic residues. Positions 339 to 352 (AAKKEMPQRKERPL) are enriched in basic and acidic residues. In terms of domain architecture, tr-type G spans 438 to 607 (SRPPVVTIMG…LLEADVLELK (170 aa)). Residues 447 to 454 (GHVDHGKT) are G1. 447–454 (GHVDHGKT) contacts GTP. The segment at 472–476 (GITQH) is G2. The interval 493 to 496 (DTPG) is G3. GTP-binding positions include 493 to 497 (DTPGH) and 547 to 550 (NKID). The G4 stretch occupies residues 547 to 550 (NKID). Residues 583 to 585 (SAK) form a G5 region.

It belongs to the TRAFAC class translation factor GTPase superfamily. Classic translation factor GTPase family. IF-2 subfamily.

The protein resides in the cytoplasm. Functionally, one of the essential components for the initiation of protein synthesis. Protects formylmethionyl-tRNA from spontaneous hydrolysis and promotes its binding to the 30S ribosomal subunits. Also involved in the hydrolysis of GTP during the formation of the 70S ribosomal complex. The protein is Translation initiation factor IF-2 of Latilactobacillus sakei subsp. sakei (strain 23K) (Lactobacillus sakei subsp. sakei).